Here is a 149-residue protein sequence, read N- to C-terminus: Macrodomain Ter protein (149 aa).

It belongs to the MatP family. Homodimer.

The protein localises to the cytoplasm. Its function is as follows. Required for spatial organization of the terminus region of the chromosome (Ter macrodomain) during the cell cycle. Prevents early segregation of duplicated Ter macrodomains during cell division. Binds specifically to matS, which is a 13 bp signature motif repeated within the Ter macrodomain. In Vibrio vulnificus (strain YJ016), this protein is Macrodomain Ter protein.